Reading from the N-terminus, the 425-residue chain is Type I restriction enzyme MjaVIII specificity subunit (425 aa).

It belongs to the type-I restriction system S methylase family. In terms of assembly, the type I restriction/modification system is composed of three polypeptides R, M and S.

Functionally, the specificity (S) subunit of a type I restriction enzyme; this subunit dictates DNA sequence specificity. The M and S subunits together form a methyltransferase (MTase) that methylates A-2 on the top and A-3 on the bottom strand of the sequence 5'-GAYN(5)GTAA-3'. In the presence of the R subunit the complex can also act as an endonuclease, binding to the same target sequence but cutting the DNA some distance from this site. Whether the DNA is cut or modified depends on the methylation state of the target sequence. When the target site is unmodified, the DNA is cut. When the target site is hemimethylated, the complex acts as a maintenance MTase modifying the DNA so that both strands become methylated. After locating a non-methylated recognition site, the enzyme complex serves as a molecular motor that translocates DNA in an ATP-dependent manner until a collision occurs that triggers cleavage. This Methanocaldococcus jannaschii (strain ATCC 43067 / DSM 2661 / JAL-1 / JCM 10045 / NBRC 100440) (Methanococcus jannaschii) protein is Type I restriction enzyme MjaVIII specificity subunit.